The sequence spans 270 residues: Formamidopyrimidine-DNA glycosylase (270 aa).

The active-site Schiff-base intermediate with DNA is the Pro2. The active-site Proton donor is Glu3. Lys58 functions as the Proton donor; for beta-elimination activity in the catalytic mechanism. DNA contacts are provided by His91, Arg110, and Arg151. An FPG-type zinc finger spans residues 236–270 (FVYGRGGENCKVCGTGLREIKLGQRASVYCPRCQS). Arg260 serves as the catalytic Proton donor; for delta-elimination activity.

The protein belongs to the FPG family. Monomer. It depends on Zn(2+) as a cofactor.

It catalyses the reaction Hydrolysis of DNA containing ring-opened 7-methylguanine residues, releasing 2,6-diamino-4-hydroxy-5-(N-methyl)formamidopyrimidine.. The catalysed reaction is 2'-deoxyribonucleotide-(2'-deoxyribose 5'-phosphate)-2'-deoxyribonucleotide-DNA = a 3'-end 2'-deoxyribonucleotide-(2,3-dehydro-2,3-deoxyribose 5'-phosphate)-DNA + a 5'-end 5'-phospho-2'-deoxyribonucleoside-DNA + H(+). In terms of biological role, involved in base excision repair of DNA damaged by oxidation or by mutagenic agents. Acts as a DNA glycosylase that recognizes and removes damaged bases. Has a preference for oxidized purines, such as 7,8-dihydro-8-oxoguanine (8-oxoG). Has AP (apurinic/apyrimidinic) lyase activity and introduces nicks in the DNA strand. Cleaves the DNA backbone by beta-delta elimination to generate a single-strand break at the site of the removed base with both 3'- and 5'-phosphates. The polypeptide is Formamidopyrimidine-DNA glycosylase (Pseudomonas fluorescens (strain ATCC BAA-477 / NRRL B-23932 / Pf-5)).